We begin with the raw amino-acid sequence, 683 residues long: MIDQYKHKQLQIGLVSPQQIKAWAKKILPNGEVVGEVTRPSTFHYKTDKPEKDGLFCERIFGPIKSGICACGNSRASVRENEDERFCQKCGVEFVDSRIRRYQMGYIKLACPVTHVWYLKGLPSYIANLLDKPLKKLEGLVYGDFSFARPSAKKPTFLRLRGLFEDEISSCNHSISPFFSTPGFATFRNREIATGAGAIREQLADLDLRIIIENSLVEWKELEDEGYSGDEWEDRKRRIRKVFLIRRMQLAKHFIQTNVEPEWMVLCLLPVLPPELRPIVYRSGDKVVTSDINELYKRVIRRNNNLAYLLKRSELAPADLVMCQEKLVQEAVDTLLDSGSRGQPTRDGHNKVYKSLSDVIEGKEGRFRETLLGKRVDYSGRSVIVVGPSLSLHQCGLPLEIAIKLFQLFVIRDLITKRATSNVRIAKRKIWEKEPIVWEILQEVMRGHPVLLNRAPTLHRLGIQAFQPTLVEGRTICLHPLVCKGFNADFDGDQMAVHLPLSLEAQAEARLLMFSHMNLLSPAIGDPICVPTQDMLIGLYVLTIGNRLGICANRYNSCGNSPNKKVNYNNNNYYKYTKDKEPHFSSSYDALGAYRQKRIGLNSPLWLRWKLDQRIVGSREVPIEVQYESFGTYHEIYAHYLVVGNRKKEIRSIYIRTTLGHISFYREIEEAIQGFSRAYSYTI.

4 residues coordinate Zn(2+): Cys-69, Cys-71, Cys-87, and Cys-90. Mg(2+) is bound by residues Asp-489, Asp-491, and Asp-493.

This sequence belongs to the RNA polymerase beta' chain family. RpoC1 subfamily. In terms of assembly, in plastids the minimal PEP RNA polymerase catalytic core is composed of four subunits: alpha, beta, beta', and beta''. When a (nuclear-encoded) sigma factor is associated with the core the holoenzyme is formed, which can initiate transcription. Requires Mg(2+) as cofactor. Zn(2+) serves as cofactor.

Its subcellular location is the plastid. The protein resides in the chloroplast. It carries out the reaction RNA(n) + a ribonucleoside 5'-triphosphate = RNA(n+1) + diphosphate. DNA-dependent RNA polymerase catalyzes the transcription of DNA into RNA using the four ribonucleoside triphosphates as substrates. The sequence is that of DNA-directed RNA polymerase subunit beta' from Zea mays (Maize).